The chain runs to 472 residues: Pentatricopeptide repeat-containing protein At3g18970 (472 aa).

8 PPR repeats span residues 107–139 (NERT…MVKK), 146–180 (SELI…TSVT), 181–216 (WNAM…GSGV), 219–253 (TDTT…GFTP), 256–286 (DVFI…MKVK), 287–321 (NVFT…GIKP), 322–352 (NEIT…MKTR), and 358–388 (VIEH…MPIK). Positions 393–472 (LLRSLCNACS…IKTRPGYSFV (80 aa)) are type E motif; degenerate.

The protein belongs to the PPR family. PCMP-E subfamily.

The sequence is that of Pentatricopeptide repeat-containing protein At3g18970 (PCMP-E93) from Arabidopsis thaliana (Mouse-ear cress).